The following is a 166-amino-acid chain: MRLILLSGLLLLGIFLANGDEVDREGKVVNSLIDALMHLQREFAKLKGSFLIVHKARSFGSGSERMYVTNKEIKNFEALRQICEQADGHIPSPQLENQNKAFANVLERHGKEAYLVVGDSANFTNWAAGEPNKAAGACVKADTHGSWHSASCDDNLLVVCEFYFIL.

Positions 1–19 are cleaved as a signal peptide; that stretch reads MRLILLSGLLLLGIFLANG. The region spanning 46–161 is the C-type lectin domain; sequence LKGSFLIVHK…CDDNLLVVCE (116 aa). 2 cysteine pairs are disulfide-bonded: Cys83/Cys160 and Cys138/Cys152. Residue Asn122 is glycosylated (N-linked (GlcNAc...) asparagine).

The protein belongs to the alpha-type phospholipase A2 inhibitor family. As to quaternary structure, homotrimer; non-covalently linked. As to expression, expressed by the liver.

It localises to the secreted. Functionally, this phospholipase A2 inhibitor binds directly phospholipase A2 in the presence or absence of calcium. This Bothrops neuwiedi (Neuwied's lancehead) protein is Phospholipase A2 inhibitor A1.